The primary structure comprises 464 residues: ERO1-like protein alpha (464 aa).

The signal sequence occupies residues 1–23 (MGRGWGLLVGLLGVVWLLRSGQG). Intrachain disulfides connect Cys35-Cys48, Cys37-Cys46, Cys85-Cys387, Cys94-Cys99, Cys94-Cys130, Cys99-Cys104, Cys207-Cys237, and Cys390-Cys393. 3 positions are modified to phosphoserine: Ser106, Ser142, and Ser144. The FAD site is built by Arg186, Thr188, and Trp199. FAD contacts are provided by Ser248 and His251. The N-linked (GlcNAc...) asparagine glycan is linked to Asn276. Positions 283 and 296 each coordinate FAD. A glycan (N-linked (GlcNAc...) asparagine) is linked at Asn380.

Belongs to the EROs family. As to quaternary structure, predominantly monomer. May function both as a monomer and a homodimer. Interacts with PDILT. Interacts with ERP44; the interaction results in retention of ERO1A in the endoplasmic reticulum. It depends on FAD as a cofactor. N-glycosylated. Post-translationally, the Cys-94/Cys-99 and Cys-390/Cys-393 disulfide bonds constitute the redox-active center. The Cys-94/Cys-99 disulfide bond may accept electron from P4HB and funnel them to the active site disulfide Cys-390/Cys-393. The regulatory Cys-99/Cys-104 disulfide bond stabilizes the other regulatory bond Cys-94/Cys-130. In terms of processing, phosphorylated on Ser-144 by FAM20C in the Golgi which increases its enzymatic activity. Phosphorylation is induced by lactation. It is also induced by hypoxia and reductive stress.

Its subcellular location is the endoplasmic reticulum membrane. It is found in the golgi apparatus lumen. The protein resides in the secreted. It localises to the cell projection. The protein localises to the dendrite. Its activity is regulated as follows. Enzyme activity is tightly regulated to prevent the accumulation of reactive oxygen species in the endoplasmic reticulum. Reversibly down-regulated by the formation of disulfide bonds between the active site Cys-94 and Cys-130, and between Cys-99 and Cys-104. Glutathione may be required to regulate its activity in the endoplasmic reticulum. Its function is as follows. Oxidoreductase involved in disulfide bond formation in the endoplasmic reticulum. Efficiently reoxidizes P4HB/PDI, the enzyme catalyzing protein disulfide formation, in order to allow P4HB to sustain additional rounds of disulfide formation. Following P4HB reoxidation, passes its electrons to molecular oxygen via FAD, leading to the production of reactive oxygen species (ROS) in the cell. Required for the proper folding of immunoglobulins. Plays an important role in ER stress-induced, CHOP-dependent apoptosis by activating the inositol 1,4,5-trisphosphate receptor IP3R1. This Rattus norvegicus (Rat) protein is ERO1-like protein alpha.